Here is a 62-residue protein sequence, read N- to C-terminus: Prokaryotic ubiquitin-like protein Pup (62 aa).

The segment at 1–36 (MEKSSQIHGSKPGDDNADEPENAAGQSQIRKQGADD) is disordered. The ARC ATPase binding stretch occupies residues 18–56 (DEPENAAGQSQIRKQGADDLLDEIDGLLESNAEEFVRSY). At Gln-62 the chain carries Deamidated glutamine. Gln-62 participates in a covalent cross-link: Isoglutamyl lysine isopeptide (Gln-Lys) (interchain with K-? in acceptor proteins).

It belongs to the prokaryotic ubiquitin-like protein family. Strongly interacts with the proteasome-associated ATPase ARC through a hydrophobic interface; the interacting region of Pup lies in its C-terminal half. There is one Pup binding site per ARC hexamer ring. In terms of processing, is modified by deamidation of its C-terminal glutamine to glutamate by the deamidase Dop, a prerequisite to the subsequent pupylation process.

It functions in the pathway protein degradation; proteasomal Pup-dependent pathway. In terms of biological role, protein modifier that is covalently attached to lysine residues of substrate proteins, thereby targeting them for proteasomal degradation. The tagging system is termed pupylation. The sequence is that of Prokaryotic ubiquitin-like protein Pup from Corynebacterium kroppenstedtii (strain DSM 44385 / JCM 11950 / CIP 105744 / CCUG 35717).